A 156-amino-acid polypeptide reads, in one-letter code: Endoribonuclease YbeY (156 aa).

Positions 122, 126, and 132 each coordinate Zn(2+).

Belongs to the endoribonuclease YbeY family. The cofactor is Zn(2+).

It localises to the cytoplasm. Single strand-specific metallo-endoribonuclease involved in late-stage 70S ribosome quality control and in maturation of the 3' terminus of the 16S rRNA. The polypeptide is Endoribonuclease YbeY (Syntrophomonas wolfei subsp. wolfei (strain DSM 2245B / Goettingen)).